A 697-amino-acid chain; its full sequence is Protein FAM13A (697 aa).

Disordered stretches follow at residues 1-21 (MACE…MSPF), 52-112 (HLFD…GFSN), and 133-229 (YIGE…QQES). A Phosphoserine modification is found at serine 19. Residues 58-78 (SSGGQSSEDSESGASSSSSTS) are compositionally biased toward low complexity. Over residues 86–103 (AKEQDESRHSRDVGRLNK) the composition is skewed to basic and acidic residues. The segment covering 146–169 (SSRLSELNENQDGLVNMENLNPTP) has biased composition (polar residues). Positions 170 to 197 (SHERTGSDHVELISDGSKENEKDGRQSQ) are enriched in basic and acidic residues. Residues serine 271 and serine 291 each carry the phosphoserine modification. 2 disordered regions span residues 307-338 (TEMP…EDLT) and 398-433 (LKIS…KKQE). Residues 398–407 (LKISEEDLPP) show a composition bias toward basic and acidic residues. A Phosphoserine modification is found at serine 401. The span at 412-422 (RSNTLPKSFGS) shows a compositional bias: polar residues. Over residues 424-433 (LEKEDEKKQE) the composition is skewed to basic and acidic residues.

It belongs to the FAM13 family.

This Bos taurus (Bovine) protein is Protein FAM13A (FAM13A).